The chain runs to 218 residues: Major NAD(P)H-flavin oxidoreductase (218 aa).

Residues Arg12–Lys16 and Asn73 each bind FMN. Leu154–Ile159 contributes to the NAD(+) binding site. Residues Glu165–Gly166 and Lys206–Arg208 contribute to the FMN site.

The protein belongs to the nitroreductase family. As to quaternary structure, homodimer. It depends on FMN as a cofactor.

Its function is as follows. Involved in bioluminescence. It is a good supplier of reduced flavin mononucleotide (FMNH2) to the bioluminescence reaction. Major FMN reductase. It is capable of using both NADH and NADPH as electron donors. As electron acceptor, FMN is the most effective, FAD is considerably effective, and riboflavin is the least effective. The chain is Major NAD(P)H-flavin oxidoreductase from Aliivibrio fischeri (Vibrio fischeri).